Consider the following 387-residue polypeptide: ATP phosphoribosyltransferase regulatory subunit (387 aa).

Belongs to the class-II aminoacyl-tRNA synthetase family. HisZ subfamily. In terms of assembly, heteromultimer composed of HisG and HisZ subunits.

The protein resides in the cytoplasm. It participates in amino-acid biosynthesis; L-histidine biosynthesis; L-histidine from 5-phospho-alpha-D-ribose 1-diphosphate: step 1/9. In terms of biological role, required for the first step of histidine biosynthesis. May allow the feedback regulation of ATP phosphoribosyltransferase activity by histidine. This is ATP phosphoribosyltransferase regulatory subunit from Ralstonia pickettii (strain 12J).